A 169-amino-acid polypeptide reads, in one-letter code: Gamma-crystallin 2 (169 aa).

Beta/gamma crystallin 'Greek key' domains are found at residues 1-34 and 35-77; these read YEDR…KVDS and GCWM…KVIP. Residues 78 to 82 are connecting peptide; that stretch reads QQKGP. Beta/gamma crystallin 'Greek key' domains follow at residues 83–123 and 124–166; these read HKMK…NVLE and GHWI…RRVL.

It belongs to the beta/gamma-crystallin family. Monomer.

Crystallins are the dominant structural components of the vertebrate eye lens. The polypeptide is Gamma-crystallin 2 (Rana temporaria (European common frog)).